Consider the following 96-residue polypeptide: C-C motif chemokine 20 (96 aa).

A signal peptide spans 1-26; sequence MCCTKSLLLAALMSVLLLHLCGESEA. Cystine bridges form between cysteine 32-cysteine 58 and cysteine 33-cysteine 74.

The protein belongs to the intercrine beta (chemokine CC) family. Post-translationally, C-terminal processed forms which lack 1, 3 or 6 amino acids are produced by proteolytic cleavage after secretion from peripheral blood monocytes. In terms of tissue distribution, expressed in the seminal plasma, endometrial fluid and follicular fluid (at protein level). Expressed predominantly in the liver, lymph nodes, appendix, peripheral blood lymphocytes, and fetal lung. Low levels seen in thymus, prostate, testis, small intestine and colon.

It localises to the secreted. In terms of biological role, acts as a ligand for C-C chemokine receptor CCR6. Signals through binding and activation of CCR6 and induces a strong chemotactic response and mobilization of intracellular calcium ions. The ligand-receptor pair CCL20-CCR6 is responsible for the chemotaxis of dendritic cells (DC), effector/memory T-cells and B-cells and plays an important role at skin and mucosal surfaces under homeostatic and inflammatory conditions, as well as in pathology, including cancer and various autoimmune diseases. CCL20 acts as a chemotactic factor that attracts lymphocytes and, slightly, neutrophils, but not monocytes. Involved in the recruitment of both the pro-inflammatory IL17 producing helper T-cells (Th17) and the regulatory T-cells (Treg) to sites of inflammation. Required for optimal migration of thymic natural regulatory T cells (nTregs) and DN1 early thymocyte progenitor cells. C-terminal processed forms have been shown to be equally chemotactically active for leukocytes. Positively regulates sperm motility and chemotaxis via its binding to CCR6 which triggers Ca2+ mobilization in the sperm which is important for its motility. Inhibits proliferation of myeloid progenitors in colony formation assays. May be involved in formation and function of the mucosal lymphoid tissues by attracting lymphocytes and dendritic cells towards epithelial cells. Possesses antibacterial activity towards E.coli ATCC 25922 and S.aureus ATCC 29213. The polypeptide is C-C motif chemokine 20 (CCL20) (Homo sapiens (Human)).